A 270-amino-acid chain; its full sequence is Centromere protein Q (270 aa).

The interval 1-59 (MSGKANTSKKKSQRVKRNVKQRADKEDEELDSPENKVGNRAKRNRSHAGHLSSKEQTKC) is disordered. Basic residues-rich tracts occupy residues 7–20 (TSKK…RNVK) and 39–48 (NRAKRNRSHA). Ser-52 is modified (phosphoserine). The stretch at 143-205 (LKVEREQERA…EEEMKEVFHI (63 aa)) forms a coiled coil.

The protein belongs to the CENP-Q/OKP1 family. Component of the CENPA-CAD complex, composed of CENPI, CENPK, CENPL, CENPO, CENPP, CENPQ, CENPR and CENPS. The CENPA-CAD complex interacts with the CENPA-NAC complex, at least composed of CENPA, CENPC, CENPH, CENPM, CENPN, CENPT and CENPU. Phosphorylation at Ser-52 is essential for CENPE recruitment to kinetochores and orderly chromosome congression.

It localises to the nucleus. The protein localises to the chromosome. The protein resides in the centromere. Functionally, component of the CENPA-CAD (nucleosome distal) complex, a complex recruited to centromeres which is involved in assembly of kinetochore proteins, mitotic progression and chromosome segregation. May be involved in incorporation of newly synthesized CENPA into centromeres via its interaction with the CENPA-NAC complex. Plays an important role in chromosome congression and in the recruitment of CENP-O complex (which comprises CENPO, CENPP, CENPQ and CENPU), CENPE and PLK1 to the kinetochores. This chain is Centromere protein Q (Cenpq), found in Rattus norvegicus (Rat).